Reading from the N-terminus, the 124-residue chain is Small ribosomal subunit protein uS12 (124 aa).

The segment at 1–32 (MPTIQQLVRKGRQAKASKTKTPALKGSPQRRG) is disordered. Positions 9–18 (RKGRQAKASK) are enriched in basic residues. Position 89 is a 3-methylthioaspartic acid (Asp89).

This sequence belongs to the universal ribosomal protein uS12 family. In terms of assembly, part of the 30S ribosomal subunit. Contacts proteins S8 and S17. May interact with IF1 in the 30S initiation complex.

Its function is as follows. With S4 and S5 plays an important role in translational accuracy. Functionally, interacts with and stabilizes bases of the 16S rRNA that are involved in tRNA selection in the A site and with the mRNA backbone. Located at the interface of the 30S and 50S subunits, it traverses the body of the 30S subunit contacting proteins on the other side and probably holding the rRNA structure together. The combined cluster of proteins S8, S12 and S17 appears to hold together the shoulder and platform of the 30S subunit. The sequence is that of Small ribosomal subunit protein uS12 from Acidothermus cellulolyticus (strain ATCC 43068 / DSM 8971 / 11B).